Reading from the N-terminus, the 206-residue chain is Large ribosomal subunit protein uL4 (206 aa).

Positions 43 to 78 (ARSGNRKQKDREEVHHTTKKPWRQKGTGRARAGMSS) are disordered. The segment covering 49–58 (KQKDREEVHH) has biased composition (basic and acidic residues). Positions 59–70 (TTKKPWRQKGTG) are enriched in basic residues.

Belongs to the universal ribosomal protein uL4 family. Part of the 50S ribosomal subunit.

Functionally, one of the primary rRNA binding proteins, this protein initially binds near the 5'-end of the 23S rRNA. It is important during the early stages of 50S assembly. It makes multiple contacts with different domains of the 23S rRNA in the assembled 50S subunit and ribosome. Forms part of the polypeptide exit tunnel. The protein is Large ribosomal subunit protein uL4 of Herminiimonas arsenicoxydans.